The sequence spans 136 residues: Succinate dehydrogenase assembly factor 3, mitochondrial (136 aa).

The transit peptide at 1-24 (MRASMVRRMAAAASSSASSSLRPA) directs the protein to the mitochondrion.

This sequence belongs to the complex I LYR family. SDHAF3 subfamily. As to quaternary structure, interacts with the iron-sulfur protein subunit within the SDH catalytic dimer.

Its subcellular location is the mitochondrion matrix. Its function is as follows. Plays an essential role in the assembly of succinate dehydrogenase (SDH), an enzyme complex (also referred to as respiratory complex II) that is a component of both the tricarboxylic acid (TCA) cycle and the mitochondrial electron transport chain, and which couples the oxidation of succinate to fumarate with the reduction of ubiquinone (coenzyme Q) to ubiquinol. Promotes maturation of the iron-sulfur protein subunit of the SDH catalytic dimer, protecting it from the deleterious effects of oxidants. May act together with SDHAF1. The protein is Succinate dehydrogenase assembly factor 3, mitochondrial of Pyricularia oryzae (strain 70-15 / ATCC MYA-4617 / FGSC 8958) (Rice blast fungus).